The primary structure comprises 126 residues: Holo-[acyl-carrier-protein] synthase (126 aa).

Residues aspartate 9 and glutamate 59 each coordinate Mg(2+).

Belongs to the P-Pant transferase superfamily. AcpS family. Requires Mg(2+) as cofactor.

The protein resides in the cytoplasm. The enzyme catalyses apo-[ACP] + CoA = holo-[ACP] + adenosine 3',5'-bisphosphate + H(+). Functionally, transfers the 4'-phosphopantetheine moiety from coenzyme A to a Ser of acyl-carrier-protein. This is Holo-[acyl-carrier-protein] synthase from Myxococcus xanthus (strain DK1622).